The primary structure comprises 220 residues: Probable transcriptional regulator NRG2 (220 aa).

C2H2-type zinc fingers lie at residues histidine 153–histidine 175 and histidine 181–histidine 205.

It localises to the nucleus. In terms of biological role, transcriptional repressor. This Saccharomyces cerevisiae (strain ATCC 204508 / S288c) (Baker's yeast) protein is Probable transcriptional regulator NRG2 (NRG2).